The sequence spans 287 residues: Membrane protein insertase YidC 2 (287 aa).

The first 26 residues, 1 to 26, serve as a signal peptide directing secretion; that stretch reads MKKKKRFKQKLLIASLVIGLMAVLSG. Cys-27 carries the N-palmitoyl cysteine lipid modification. The S-diacylglycerol cysteine moiety is linked to residue Cys-27. 5 consecutive transmembrane segments (helical) span residues 65-85, 135-155, 178-198, 207-224, and 228-250; these read YAVGIIVVTILIRLLIMPLMI, MMGCLPLLIQMPILLGFYQAI, YILPVVAALTTFLSSKISMMG, AMIVYIMPVMILFMGITL, and LALYWIIGNIFTVFQTLLINNPF.

It belongs to the OXA1/ALB3/YidC family. Type 2 subfamily.

Its subcellular location is the cell membrane. Its function is as follows. Required for the insertion and/or proper folding and/or complex formation of integral membrane proteins into the membrane. Involved in integration of membrane proteins that insert both dependently and independently of the Sec translocase complex, as well as at least some lipoproteins. The sequence is that of Membrane protein insertase YidC 2 from Listeria monocytogenes serovar 1/2a (strain ATCC BAA-679 / EGD-e).